Reading from the N-terminus, the 260-residue chain is Type III pantothenate kinase (260 aa).

An ATP-binding site is contributed by 6 to 13 (DAGNTNIV). Position 108-111 (108-111 (GADR)) interacts with substrate. The Proton acceptor role is filled by Asp-110. Asp-130 is a K(+) binding site. ATP is bound at residue Thr-133. Substrate is bound at residue Thr-187.

The protein belongs to the type III pantothenate kinase family. In terms of assembly, homodimer. The cofactor is NH4(+). Requires K(+) as cofactor.

It localises to the cytoplasm. It catalyses the reaction (R)-pantothenate + ATP = (R)-4'-phosphopantothenate + ADP + H(+). It functions in the pathway cofactor biosynthesis; coenzyme A biosynthesis; CoA from (R)-pantothenate: step 1/5. Functionally, catalyzes the phosphorylation of pantothenate (Pan), the first step in CoA biosynthesis. The chain is Type III pantothenate kinase from Rhizorhabdus wittichii (strain DSM 6014 / CCUG 31198 / JCM 15750 / NBRC 105917 / EY 4224 / RW1) (Sphingomonas wittichii).